Here is a 336-residue protein sequence, read N- to C-terminus: tRNA N6-adenosine threonylcarbamoyltransferase (336 aa).

Residues His111 and His115 each coordinate Fe cation. Substrate is bound by residues Leu134 to Gly138, Asp167, Gly180, and Asn271. Residue Asp299 participates in Fe cation binding.

The protein belongs to the KAE1 / TsaD family. Fe(2+) serves as cofactor.

It localises to the cytoplasm. The enzyme catalyses L-threonylcarbamoyladenylate + adenosine(37) in tRNA = N(6)-L-threonylcarbamoyladenosine(37) in tRNA + AMP + H(+). Required for the formation of a threonylcarbamoyl group on adenosine at position 37 (t(6)A37) in tRNAs that read codons beginning with adenine. Is involved in the transfer of the threonylcarbamoyl moiety of threonylcarbamoyl-AMP (TC-AMP) to the N6 group of A37, together with TsaE and TsaB. TsaD likely plays a direct catalytic role in this reaction. The sequence is that of tRNA N6-adenosine threonylcarbamoyltransferase from Thioalkalivibrio sulfidiphilus (strain HL-EbGR7).